We begin with the raw amino-acid sequence, 532 residues long: Flavin-containing monooxygenase 3 (532 aa).

Residues glycine 9 to serine 13, glutamate 32, leucine 40 to tryptophan 41, and asparagine 61 to serine 62 each bind FAD. NADP(+) is bound by residues serine 60 to asparagine 61 and serine 195 to aspartate 198. Serine 401 carries the post-translational modification Phosphoserine. Residues phenylalanine 510–valine 530 traverse the membrane as a helical segment.

This sequence belongs to the FMO family. It depends on FAD as a cofactor.

Its subcellular location is the microsome membrane. It localises to the endoplasmic reticulum membrane. It carries out the reaction trimethylamine + NADPH + O2 = trimethylamine N-oxide + NADP(+) + H2O. The catalysed reaction is N,N-dimethylaniline + NADPH + O2 + H(+) = N,N-dimethylaniline N-oxide + NADP(+) + H2O. The enzyme catalyses hypotaurine + NADPH + O2 + H(+) = taurine + NADP(+) + H2O. It catalyses the reaction (S)-nicotine + NADPH + O2 = trans-(S)-nicotine N(1')-oxide + NADP(+) + H2O. It carries out the reaction albendazole + NADPH + O2 + H(+) = albendazole S-oxide + NADP(+) + H2O. Functionally, essential hepatic enzyme that catalyzes the oxygenation of a wide variety of nitrogen- and sulfur-containing compounds including drugs as well as dietary compounds. Plays an important role in the metabolism of trimethylamine (TMA), via the production of trimethylamine N-oxide (TMAO) metabolite. TMA is generated by the action of gut microbiota using dietary precursors such as choline, choline containing compounds, betaine or L-carnitine. By regulating TMAO concentration, FMO3 directly impacts both platelet responsiveness and rate of thrombus formation. The chain is Flavin-containing monooxygenase 3 (FMO3) from Pan troglodytes (Chimpanzee).